The following is a 351-amino-acid chain: Protein-glutamate methylesterase/protein-glutamine glutaminase 2 (351 aa).

In terms of domain architecture, Response regulatory spans 4–121 (KVLVVDDSTL…PQGFNEYQDL (118 aa)). D55 carries the 4-aspartylphosphate modification. The 193-residue stretch at 156–348 (RTVNTQLVAI…DKLLQYLASV (193 aa)) folds into the CheB-type methylesterase domain. Catalysis depends on residues S168, H194, and D290.

Belongs to the CheB family. In terms of processing, phosphorylated by CheA. Phosphorylation of the N-terminal regulatory domain activates the methylesterase activity.

The protein resides in the cytoplasm. It carries out the reaction [protein]-L-glutamate 5-O-methyl ester + H2O = L-glutamyl-[protein] + methanol + H(+). The enzyme catalyses L-glutaminyl-[protein] + H2O = L-glutamyl-[protein] + NH4(+). Involved in chemotaxis. Part of a chemotaxis signal transduction system that modulates chemotaxis in response to various stimuli. Catalyzes the demethylation of specific methylglutamate residues introduced into the chemoreceptors (methyl-accepting chemotaxis proteins or MCP) by CheR. Also mediates the irreversible deamidation of specific glutamine residues to glutamic acid. This chain is Protein-glutamate methylesterase/protein-glutamine glutaminase 2, found in Shewanella oneidensis (strain ATCC 700550 / JCM 31522 / CIP 106686 / LMG 19005 / NCIMB 14063 / MR-1).